The following is a 279-amino-acid chain: Zinc finger CCCH domain-containing protein 42 (279 aa).

Residues 11–77 form a disordered region; it reads SDHRSSSTPM…KAAVEPQEYP (67 aa). Positions 16 to 39 are enriched in low complexity; the sequence is SSTPMATTTSSSASDPAAISPTPS. C3H1-type zinc fingers lie at residues 79 to 107, 120 to 148, and 186 to 214; these read RPGV…HPAK, RPGE…HPPD, and RPGT…HPNS.

This is Zinc finger CCCH domain-containing protein 42 from Oryza sativa subsp. japonica (Rice).